A 421-amino-acid polypeptide reads, in one-letter code: Lipid II:glycine glycyltransferase (421 aa).

This sequence belongs to the FemABX family. In terms of assembly, monomer.

It localises to the cytoplasm. The catalysed reaction is beta-D-GlcNAc-(1-&gt;4)-Mur2Ac(oyl-L-Ala-D-isoglutaminyl-L-Lys-D-Ala-D-Ala)-di-trans,octa-cis-undecaprenyl diphosphate + glycyl-tRNA(Gly) = beta-D-GlcNAc-(1-&gt;4)-Mur2Ac(oyl-L-Ala-D-isoglutaminyl-L-Lys-(N(6)-Gly)-D-Ala-D-Ala)-di-trans,octa-cis-undecaprenyl diphosphate + tRNA(Gly) + H(+). Its function is as follows. Catalyzes the incorporation of the first glycine of the pentaglycine interpeptide bridge, which is characteristic of the S.aureus peptidoglycan. This glycine is added to the epsilon-amino group of the L-lysine of the membrane-bound lipid II intermediate (GlcNAc-(beta-1,4)-N-acetylmuramic acid(-L-Ala-D-iGln-L-Lys-D-Ala-D-Ala)-pyrophosphoryl-undecaprenol), using glycyl-tRNA(Gly) as donor, in a ribosome-independent mechanism. The protein is Lipid II:glycine glycyltransferase (femX) of Staphylococcus aureus (strain MSSA476).